A 613-amino-acid chain; its full sequence is Sulfhydryl oxidase 1 (613 aa).

Residues 1 to 30 (MTGCGRRSGWLPPLRLLLLPLLLGGPGVGA) form the signal peptide. Residues 37–157 (YSASDPLTLL…RERLIDALES (121 aa)) enclose the Thioredoxin domain. Residues Cys-71 and Cys-74 each act as nucleophile in the active site. Cystine bridges form between Cys-71/Cys-74 and Cys-102/Cys-111. Residues Asn-131 and Asn-244 are each glycosylated (N-linked (GlcNAc...) asparagine). Cys-394 and Cys-406 form a disulfide bridge. The ERV/ALR sulfhydryl oxidase domain occupies 397–504 (SESHFRGFPC…EDPQFPKVQW (108 aa)). FAD is bound by residues Arg-402, Trp-409, and His-413. A Phosphoserine modification is found at Ser-427. An intrachain disulfide couples Cys-450 to Cys-453. Residues Asp-452, His-456, 479–486 (WTSHNRVN), Lys-501, and Trp-504 each bind FAD. A disulfide bridge connects residues Cys-510 and Cys-513.

The protein belongs to the quiescin-sulfhydryl oxidase (QSOX) family. As to quaternary structure, monomer. FAD is required as a cofactor. Post-translationally, N-glycosylated. O-glycosylated on Thr and Ser residues. Detected in endometrium and in uterus glandular epithelial cells (at protein level). Expressed in testis, placenta, pancreas, lung, ovary, endometrium, but not in brain, liver and kidney tissues. Higher expression in epithelial cells.

It localises to the secreted. It catalyses the reaction 2 R'C(R)SH + O2 = R'C(R)S-S(R)CR' + H2O2. Catalyzes the oxidation of sulfhydryl groups in peptide and protein thiols to disulfides with the reduction of oxygen to hydrogen peroxide. Plays a role in disulfide bond formation in a variety of extracellular proteins. In fibroblasts, required for normal incorporation of laminin into the extracellular matrix, and thereby for normal cell-cell adhesion and cell migration. This Cavia porcellus (Guinea pig) protein is Sulfhydryl oxidase 1 (QSOX1).